Consider the following 584-residue polypeptide: Peroxynitrite isomerase THAP4 (584 aa).

The THAP-type zinc-finger motif lies at 1 to 85; the sequence is MVICCAAANC…LKPTAVPSIF (85 aa). The tract at residues 84-330 is disordered; the sequence is IFHLAEKKRR…EAVQSEHSDA (247 aa). Positions 89–104 are enriched in basic residues; the sequence is EKKRRAGGHGRPRRRD. The span at 122–138 shows a compositional bias: low complexity; that stretch reads GKAAAGSPSSSSASPMA. The segment covering 158-178 has biased composition (basic and acidic residues); that stretch reads AARETAGQERGRQPLEGRAED. The segment covering 190-208 has biased composition (low complexity); sequence GEAGTGAEDAGEEGATPAD. The short motif at 236–239 is the HCFC1-binding motif (HBM) element; that stretch reads LHSY. At serine 240 the chain carries Phosphoserine. The segment covering 248-267 has biased composition (basic and acidic residues); the sequence is ERPAVPREPVERKRLRRDAE. The interval 422–584 is nitrobindin; that stretch reads PPKMSPVVEP…LHVTYKKVTP (163 aa). Positions 451 and 574 each coordinate heme b.

It in the C-terminal section; belongs to the nitrobindin family. In terms of assembly, homodimer. The cofactor is heme b.

The protein resides in the cytoplasm. The protein localises to the nucleus. The enzyme catalyses peroxynitrite = nitrate. The protein operates within nitrogen metabolism. Functionally, heme-binding protein able to scavenge peroxynitrite and to protect free L-tyrosine against peroxynitrite-mediated nitration, by acting as a peroxynitrite isomerase that converts peroxynitrite to nitrate. Therefore, this protein likely plays a role in peroxynitrite sensing and in the detoxification of reactive nitrogen and oxygen species (RNS and ROS, respectively). Is able to bind nitric oxide (NO) in vitro, but may act as a sensor of peroxynitrite levels in vivo, possibly modulating the transcriptional activity residing in the N-terminal region. This chain is Peroxynitrite isomerase THAP4, found in Bos taurus (Bovine).